Reading from the N-terminus, the 361-residue chain is MDKVMAQLESLVAHYEELQEMMADPEVINDTKRYMEISKEEADLREVVQKYKKYKENKKEIEDNKEIISNETDSDLIEMAKEENAELEKEIPELEDQIKILMLPKDPNDDKDIIMEIRGAAGGDEASLFAGDLLRMYEKYAERQNWNVSMIDSEPTEVGGYKRVAIMITGDKVYSKLKYENGAHRVQRIPVTESQGRVHTSTATVAVMPEYEQVDIDIDPKDIRVDVYRSSGAGGQHINKTSSAVRMTHLPTGIVVAMQDQRSQQQNREKAMQILKSRVYDYYESQNQAQYDAKRKNAVGTGDRSERIRTYNYPQNRVTDHRIGLTLNKLDRVMNGELDEIIDALILYNQTKQLEELADNA.

Gln-236 carries the N5-methylglutamine modification.

This sequence belongs to the prokaryotic/mitochondrial release factor family. In terms of processing, methylated by PrmC. Methylation increases the termination efficiency of RF1.

It localises to the cytoplasm. In terms of biological role, peptide chain release factor 1 directs the termination of translation in response to the peptide chain termination codons UAG and UAA. This is Peptide chain release factor 1 from Lactobacillus acidophilus (strain ATCC 700396 / NCK56 / N2 / NCFM).